Here is a 260-residue protein sequence, read N- to C-terminus: Centromere protein K (260 aa).

Positions 84–173 (EEELQKVKKE…KKLMNALGEF (90 aa)) form a coiled coil.

Belongs to the CENP-K/MCM22 family. Component of the CENPA-HI complex, at least composed of CENPH, CENPI, CENPK, CENPL, CENPM, CENPO and CENPP.

It localises to the nucleus. The protein resides in the chromosome. The protein localises to the centromere. Its subcellular location is the kinetochore. Functionally, component of the CENPA-HI complex, a centromeric complex involved in assembly of kinetochore proteins, mitotic progression and chromosome segregation. The chain is Centromere protein K (CENPK) from Gallus gallus (Chicken).